A 170-amino-acid polypeptide reads, in one-letter code: CCHC-type zinc finger nucleic acid binding protein (170 aa).

N-acetylserine is present on S2. The CCHC-type 1 zinc-finger motif lies at 4 to 21; it reads NECFKCGRSGHWARECPT. K8 carries the N6-acetyllysine modification. Omega-N-methylarginine; by PRMT1 is present on residues R25 and R27. The segment at 25-33 is RNA-binding Arg/Gly-rich region (RGG-box); the sequence is RGRGMRSRG. At S42 the chain carries Phosphoserine. 6 CCHC-type zinc fingers span residues 45-62, 65-82, 89-106, 110-127, 128-145, and 149-166; these read DICY…DCDL, DACY…DCKE, QCCY…DCDH, QKCY…DCTK, VKCY…NCSK, and VNCY…ECTI. Position 72 is an omega-N-methylarginine (R72).

In terms of assembly, associates with the 40S ribosomal subunit, the 80S ribosome and with polysomes. In terms of processing, arginine methylation by PRMT1 in the Arg/Gly-rich region impedes RNA binding.

It localises to the nucleus. The protein resides in the cytoplasm. It is found in the endoplasmic reticulum. Single-stranded DNA-binding protein that preferentially binds to the sterol regulatory element (SRE) sequence 5'-GTGCGGTG-3', and thereby mediates transcriptional repression. Has a role as transactivator of the Myc promoter. Binds single-stranded RNA in a sequence-specific manner. Binds G-rich elements in target mRNA coding sequences. Prevents G-quadruplex structure formation in vitro, suggesting a role in supporting translation by resolving stable structures on mRNAs. The sequence is that of CCHC-type zinc finger nucleic acid binding protein (CNBP) from Bos taurus (Bovine).